A 33-amino-acid chain; its full sequence is Brevinin-2Rk (33 aa).

Cys27 and Cys33 form a disulfide bridge.

Expressed by the skin glands.

Its subcellular location is the secreted. Antimicrobial peptide. This Pelophylax ridibundus (Marsh frog) protein is Brevinin-2Rk.